Reading from the N-terminus, the 564-residue chain is Probable diguanylate cyclase DgcQ (564 aa).

A run of 2 helical transmembrane segments spans residues 20 to 40 (LGPG…STLL) and 360 to 380 (IALT…WYVI). The GGDEF domain occupies 428–563 (HPFSVIQVDL…GRNRVFASDN (136 aa)). D436 is a Mg(2+) binding site. Residues N444, H449, and D453 each coordinate substrate. A Mg(2+)-binding site is contributed by E479. The Proton acceptor role is filled by E479.

Homodimer. It depends on Mg(2+) as a cofactor.

Its subcellular location is the cell inner membrane. It catalyses the reaction 2 GTP = 3',3'-c-di-GMP + 2 diphosphate. Its pathway is glycan metabolism; bacterial cellulose biosynthesis. The protein operates within purine metabolism; 3',5'-cyclic di-GMP biosynthesis. In terms of biological role, catalyzes the synthesis of cyclic-di-GMP (c-di-GMP) via the condensation of 2 GTP molecules. Cyclic-di-GMP is a second messenger which controls cell surface-associated traits in bacteria. Involved in the regulation of cellulose production. The polypeptide is Probable diguanylate cyclase DgcQ (Escherichia coli O157:H7).